A 348-amino-acid polypeptide reads, in one-letter code: NAC domain-containing protein 101 (348 aa).

The region spanning 7-156 (IPPGYRFHPT…GWVVCRAFKK (150 aa)) is the NAC domain. A DNA-binding region spans residues 107–162 (VGMRKTLVFYKGRAPNGQKSDWIMHEYRLETDENGPPHEEGWVVCRAFKKKLTTMN). The disordered stretch occupies residues 325–348 (MVSMNASSSSSPCSFYSWAQNTHT). Over residues 327–341 (SMNASSSSSPCSFYS) the composition is skewed to low complexity.

This sequence belongs to the plant vascular related NAC-domain protein family. As to quaternary structure, homodimer. In terms of tissue distribution, expressed in root inner metaxylem vessels and in hypocotyl vessels. Present in root developing xylems. Accumulates in the xylem but not in interfascicular fibers or pith cells in inflorescence stems. Absent from secondary xylem in roots.

It is found in the nucleus. In terms of biological role, transcription activator that binds to the secondary wall NAC binding element (SNBE), 5'-(T/A)NN(C/T)(T/C/G)TNNNNNNNA(A/C)GN(A/C/T)(A/T)-3', and to the tracheary elements (TE) specific regulating cis-element (TERE), 5'-CTTNAAAGCNA-3', in the promoter of target genes (e.g. genes involved in secondary wall biosynthesis, cell wall modification such as xylan accumulation, and programmed cell death). Involved in xylem formation in roots and shoots, especially regulating metaxylem vessel differentiation by promoting immature xylem vessel-specific genes expression, especially genes regulating programmed cell death (PCD) and secondary wall formation in tracheary elements (TE). Can activate MYB25, MYB46, MYB58, MYB63, MYB83, MYB103, CESA4, LBD15, LBD30, ERF115, XCP1, XCP2, NAC010/SND3, KNAT7, ASL19 and ASL20 expression. This Arabidopsis thaliana (Mouse-ear cress) protein is NAC domain-containing protein 101.